Consider the following 362-residue polypeptide: NAD(P)H-quinone oxidoreductase subunit 1, chloroplastic (362 aa).

8 helical membrane-spanning segments follow: residues 31 to 51 (WVPLPILSLVIVATLGVLVIV), 99 to 119 (WLFTLGPAVVVIPIFLAYLVV), 132 to 152 (IGIFFWIAISSIAPIGLLMSG), 178 to 198 (LAICVLSVCLLADSLSTVDIV), 206 to 226 (ILTWNIWRQPIGFVAFLIAAL), 268 to 288 (LVSGCFVTVLYLGGWHGPFAI), 303 to 323 (AFLGITWTLLKTFLFLFAAIL), and 336 to 356 (LLDLGWKFLLPVSLGNLLLTA).

This sequence belongs to the complex I subunit 1 family. As to quaternary structure, NDH is composed of at least 16 different subunits, 5 of which are encoded in the nucleus.

Its subcellular location is the plastid. It localises to the chloroplast thylakoid membrane. The catalysed reaction is a plastoquinone + NADH + (n+1) H(+)(in) = a plastoquinol + NAD(+) + n H(+)(out). It carries out the reaction a plastoquinone + NADPH + (n+1) H(+)(in) = a plastoquinol + NADP(+) + n H(+)(out). Its function is as follows. NDH shuttles electrons from NAD(P)H:plastoquinone, via FMN and iron-sulfur (Fe-S) centers, to quinones in the photosynthetic chain and possibly in a chloroplast respiratory chain. The immediate electron acceptor for the enzyme in this species is believed to be plastoquinone. Couples the redox reaction to proton translocation, and thus conserves the redox energy in a proton gradient. The sequence is that of NAD(P)H-quinone oxidoreductase subunit 1, chloroplastic from Nephroselmis olivacea (Green alga).